Here is a 297-residue protein sequence, read N- to C-terminus: Diaminopimelate epimerase (297 aa).

Positions 13, 46, and 66 each coordinate substrate. Cys76 acts as the Proton donor in catalysis. Substrate-binding positions include 77–78 (GN), Asn174, Asn207, and 225–226 (ER). The Proton acceptor role is filled by Cys234. 235-236 (GT) contacts substrate.

This sequence belongs to the diaminopimelate epimerase family. As to quaternary structure, homodimer.

It localises to the cytoplasm. It carries out the reaction (2S,6S)-2,6-diaminopimelate = meso-2,6-diaminopimelate. It participates in amino-acid biosynthesis; L-lysine biosynthesis via DAP pathway; DL-2,6-diaminopimelate from LL-2,6-diaminopimelate: step 1/1. Catalyzes the stereoinversion of LL-2,6-diaminopimelate (L,L-DAP) to meso-diaminopimelate (meso-DAP), a precursor of L-lysine and an essential component of the bacterial peptidoglycan. This chain is Diaminopimelate epimerase, found in Leptothrix cholodnii (strain ATCC 51168 / LMG 8142 / SP-6) (Leptothrix discophora (strain SP-6)).